Here is a 279-residue protein sequence, read N- to C-terminus: Beta-porphyranase E (279 aa).

A signal peptide spans 1–18 (MGNTMLLTLLLVVVAAYG). One can recognise a GH16 domain in the interval 19–277 (QTPPPPEGFR…WVRSYTLLPV (259 aa)). The substrate site is built by W56, R60, E141, E146, and E243. Catalysis depends on E141, which acts as the Nucleophile. E146 acts as the Proton donor in catalysis.

The protein belongs to the glycosyl hydrolase 16 family.

The protein resides in the periplasm. It carries out the reaction Hydrolysis of beta-D-galactopyranose-(1-&gt;4)-alpha-L-galactopyranose-6-sulfate linkages in porphyran.. In terms of biological role, cleaves the sulfated polysaccharide porphyran at the (1-&gt;4) linkages between beta-D-galactopyranose and alpha-L-galactopyranose-6-sulfate, forming mostly the disaccharide alpha-L-galactopyranose-6-sulfate-(1-&gt;3)-beta-D-galactose. This is Beta-porphyranase E (porE) from Zobellia galactanivorans (strain DSM 12802 / CCUG 47099 / CIP 106680 / NCIMB 13871 / Dsij).